Here is a 297-residue protein sequence, read N- to C-terminus: Mitochondrial citrate transporter A (297 aa).

Solcar repeat units lie at residues 12–91 (PSSL…LKSL), 102–188 (PKTV…LKQM), and 199–286 (LGTA…TMDA). Helical transmembrane passes span 18 to 31 (IIAG…EIAI), 61 to 81 (SQWY…AGIR), 99 to 119 (ISGP…SLLA), 160 to 180 (FFQG…TRFS), 192 to 212 (YVAP…GIAG), and 251 to 272 (KDEG…LIMS).

This sequence belongs to the mitochondrial carrier (TC 2.A.29) family.

It localises to the mitochondrion inner membrane. It catalyses the reaction citrate(in) + H(+)(in) = citrate(out) + H(+)(out). Its function is as follows. Mitochondrial transporter that mediates citrate export from mitochondria to cytoplasm. Both ctpA, ctpB, and ctpD play important roles in citric acid transport across the mitochondrial membrane and function in a redundant manner. This is Mitochondrial citrate transporter A from Aspergillus niger (strain ATCC 1015 / CBS 113.46 / FGSC A1144 / LSHB Ac4 / NCTC 3858a / NRRL 328 / USDA 3528.7).